A 212-amino-acid chain; its full sequence is NAD(P)H-quinone oxidoreductase subunit K, chloroplastic (212 aa).

4 residues coordinate [4Fe-4S] cluster: cysteine 43, cysteine 44, cysteine 108, and cysteine 139.

Belongs to the complex I 20 kDa subunit family. In terms of assembly, NDH is composed of at least 16 different subunits, 5 of which are encoded in the nucleus. It depends on [4Fe-4S] cluster as a cofactor.

The protein resides in the plastid. It is found in the chloroplast thylakoid membrane. It carries out the reaction a plastoquinone + NADH + (n+1) H(+)(in) = a plastoquinol + NAD(+) + n H(+)(out). It catalyses the reaction a plastoquinone + NADPH + (n+1) H(+)(in) = a plastoquinol + NADP(+) + n H(+)(out). NDH shuttles electrons from NAD(P)H:plastoquinone, via FMN and iron-sulfur (Fe-S) centers, to quinones in the photosynthetic chain and possibly in a chloroplast respiratory chain. The immediate electron acceptor for the enzyme in this species is believed to be plastoquinone. Couples the redox reaction to proton translocation, and thus conserves the redox energy in a proton gradient. This chain is NAD(P)H-quinone oxidoreductase subunit K, chloroplastic, found in Phaseolus vulgaris (Kidney bean).